The primary structure comprises 457 residues: tRNA modification GTPase MnmE (457 aa).

3 residues coordinate (6S)-5-formyl-5,6,7,8-tetrahydrofolate: arginine 23, glutamate 86, and arginine 125. The TrmE-type G domain maps to 221–377 (GVSVLIAGKP…LREAVFETFI (157 aa)). Asparagine 231 lines the K(+) pocket. Residues 231–236 (NVGKSS), 250–256 (TSVPGTT), and 275–278 (DTAG) contribute to the GTP site. Position 235 (serine 235) interacts with Mg(2+). Threonine 250, valine 252, and threonine 255 together coordinate K(+). Threonine 256 contributes to the Mg(2+) binding site. Lysine 457 is a binding site for (6S)-5-formyl-5,6,7,8-tetrahydrofolate.

It belongs to the TRAFAC class TrmE-Era-EngA-EngB-Septin-like GTPase superfamily. TrmE GTPase family. As to quaternary structure, homodimer. Heterotetramer of two MnmE and two MnmG subunits. Requires K(+) as cofactor.

Its subcellular location is the cytoplasm. Functionally, exhibits a very high intrinsic GTPase hydrolysis rate. Involved in the addition of a carboxymethylaminomethyl (cmnm) group at the wobble position (U34) of certain tRNAs, forming tRNA-cmnm(5)s(2)U34. This is tRNA modification GTPase MnmE from Geobacter metallireducens (strain ATCC 53774 / DSM 7210 / GS-15).